Consider the following 462-residue polypeptide: RuvB-like 2 (462 aa).

76-83 (GQPGTGKT) lines the ATP pocket.

It belongs to the RuvB family. As to quaternary structure, forms homohexameric rings. Can form a dodecamer with ruvbl2 made of two stacked hexameric rings. Is a component of the RNA polymerase II holoenzyme complex. Component of the chromatin-remodeling Ino80 complex. Component of some MLL1/MLL complex.

The protein localises to the nucleus. It is found in the dynein axonemal particle. The enzyme catalyses ATP + H2O = ADP + phosphate + H(+). Functionally, has single-stranded DNA-stimulated ATPase and ATP-dependent DNA helicase (5' to 3') activity suggesting a role in nuclear processes such as recombination and transcription. Proposed core component of the chromatin remodeling INO80 complex which exhibits DNA- and nucleosome-activated ATPase activity and catalyzes ATP-dependent nucleosome sliding. Involved in the endoplasmic reticulum (ER)-associated degradation (ERAD) pathway where it negatively regulates expression of ER stress response genes. This Xenopus laevis (African clawed frog) protein is RuvB-like 2 (ruvbl2).